A 400-amino-acid chain; its full sequence is Enolase (400 aa).

Q154 is a (2R)-2-phosphoglycerate binding site. E197 serves as the catalytic Proton donor. The Mg(2+) site is built by D233, E274, and D301. (2R)-2-phosphoglycerate is bound by residues K326, R355, S356, and K377. K326 functions as the Proton acceptor in the catalytic mechanism.

Belongs to the enolase family. It depends on Mg(2+) as a cofactor.

The protein resides in the cytoplasm. It localises to the secreted. Its subcellular location is the cell surface. The enzyme catalyses (2R)-2-phosphoglycerate = phosphoenolpyruvate + H2O. It participates in carbohydrate degradation; glycolysis; pyruvate from D-glyceraldehyde 3-phosphate: step 4/5. In terms of biological role, catalyzes the reversible conversion of 2-phosphoglycerate (2-PG) into phosphoenolpyruvate (PEP). It is essential for the degradation of carbohydrates via glycolysis. In Picrophilus torridus (strain ATCC 700027 / DSM 9790 / JCM 10055 / NBRC 100828 / KAW 2/3), this protein is Enolase.